The sequence spans 565 residues: CTP synthase (565 aa).

Residues 1–272 (MARPKNVKHI…DLRVLKKLGL (272 aa)) form an amidoligase domain region. Ser18 is a binding site for CTP. Ser18 contacts UTP. 19–24 (SLGKGI) serves as a coordination point for ATP. Residue Tyr59 coordinates L-glutamine. An ATP-binding site is contributed by Asp76. 2 residues coordinate Mg(2+): Asp76 and Glu146. Residues 153–155 (DIE), 193–198 (KTKPTQ), and Lys229 each bind CTP. UTP is bound by residues 193 to 198 (KTKPTQ) and Lys229. A Glutamine amidotransferase type-1 domain is found at 299 to 543 (TIGICGKYTE…VAAAKEYAHG (245 aa)). Gly363 contributes to the L-glutamine binding site. Residue Cys390 is the Nucleophile; for glutamine hydrolysis of the active site. L-glutamine-binding positions include 391–394 (LGMQ), Glu414, and Arg471. Catalysis depends on residues His516 and Glu518.

The protein belongs to the CTP synthase family. In terms of assembly, homotetramer.

It catalyses the reaction UTP + L-glutamine + ATP + H2O = CTP + L-glutamate + ADP + phosphate + 2 H(+). The catalysed reaction is L-glutamine + H2O = L-glutamate + NH4(+). The enzyme catalyses UTP + NH4(+) + ATP = CTP + ADP + phosphate + 2 H(+). It functions in the pathway pyrimidine metabolism; CTP biosynthesis via de novo pathway; CTP from UDP: step 2/2. Allosterically activated by GTP, when glutamine is the substrate; GTP has no effect on the reaction when ammonia is the substrate. The allosteric effector GTP functions by stabilizing the protein conformation that binds the tetrahedral intermediate(s) formed during glutamine hydrolysis. Inhibited by the product CTP, via allosteric rather than competitive inhibition. In terms of biological role, catalyzes the ATP-dependent amination of UTP to CTP with either L-glutamine or ammonia as the source of nitrogen. Regulates intracellular CTP levels through interactions with the four ribonucleotide triphosphates. This Pelodictyon phaeoclathratiforme (strain DSM 5477 / BU-1) protein is CTP synthase.